Consider the following 1391-residue polypeptide: DNA-directed RNA polymerase subunit beta (1391 aa).

This sequence belongs to the RNA polymerase beta chain family. In terms of assembly, the RNAP catalytic core consists of 2 alpha, 1 beta, 1 beta' and 1 omega subunit. When a sigma factor is associated with the core the holoenzyme is formed, which can initiate transcription.

The enzyme catalyses RNA(n) + a ribonucleoside 5'-triphosphate = RNA(n+1) + diphosphate. Its function is as follows. DNA-dependent RNA polymerase catalyzes the transcription of DNA into RNA using the four ribonucleoside triphosphates as substrates. This is DNA-directed RNA polymerase subunit beta from Mycoplasma pneumoniae (strain ATCC 29342 / M129 / Subtype 1) (Mycoplasmoides pneumoniae).